The primary structure comprises 234 residues: Sugar fermentation stimulation protein A (234 aa).

The H-T-H motif DNA-binding region spans 201 to 220 (LLSEAQQRGVEILAYKAEIS).

Belongs to the SfsA family.

Functionally, binds to DNA non-specifically. Could be a regulatory factor involved in maltose metabolism. In Shigella flexneri, this protein is Sugar fermentation stimulation protein A.